Reading from the N-terminus, the 337-residue chain is DNA-directed RNA polymerase subunit alpha (337 aa).

Residues 1 to 233 (MIQKNWQELI…DQLSIFVNFE (233 aa)) are alpha N-terminal domain (alpha-NTD). The tract at residues 249-337 (FNPALLKKVD…DLAKRYEDQY (89 aa)) is alpha C-terminal domain (alpha-CTD).

It belongs to the RNA polymerase alpha chain family. In terms of assembly, homodimer. The RNAP catalytic core consists of 2 alpha, 1 beta, 1 beta' and 1 omega subunit. When a sigma factor is associated with the core the holoenzyme is formed, which can initiate transcription.

The catalysed reaction is RNA(n) + a ribonucleoside 5'-triphosphate = RNA(n+1) + diphosphate. DNA-dependent RNA polymerase catalyzes the transcription of DNA into RNA using the four ribonucleoside triphosphates as substrates. In Brucella abortus (strain S19), this protein is DNA-directed RNA polymerase subunit alpha.